Here is a 196-residue protein sequence, read N- to C-terminus: MMIDIPDDRLVAGVDEVGRGPLVGDVVTAAVILDPANPIIGLNDSKKLSEKKRLALFDEIKEKALAWSVGRASPAEIDELNILHATMLAMQRAVAGLSIAPELVFIDGNRCPSLSMEARAVVKGDSLVAAISAASILAKVTRDAEMTELDSRHPEYGFARHKGYPTAEHLAILAERGPLPEYRKSFKPVRRALGIE.

An RNase H type-2 domain is found at 9 to 196; it reads RLVAGVDEVG…KPVRRALGIE (188 aa). A divalent metal cation-binding residues include Asp-15, Glu-16, and Asp-107.

Belongs to the RNase HII family. Mn(2+) is required as a cofactor. It depends on Mg(2+) as a cofactor.

The protein resides in the cytoplasm. The enzyme catalyses Endonucleolytic cleavage to 5'-phosphomonoester.. Functionally, endonuclease that specifically degrades the RNA of RNA-DNA hybrids. This chain is Ribonuclease HII, found in Aeromonas hydrophila subsp. hydrophila (strain ATCC 7966 / DSM 30187 / BCRC 13018 / CCUG 14551 / JCM 1027 / KCTC 2358 / NCIMB 9240 / NCTC 8049).